Consider the following 301-residue polypeptide: D-alanine--D-alanine ligase (301 aa).

An ATP-grasp domain is found at 101–296 (KLMWRAAGLA…YPTLVRRVLE (196 aa)). An ATP-binding site is contributed by 127–182 (EEELGLPLFVKPAREGSSIGVTKVKERGALKAAYEEAARHDPLVIAEKGVMGGEYT). Mg(2+)-binding residues include Asp-250, Glu-263, and Asn-265.

It belongs to the D-alanine--D-alanine ligase family. It depends on Mg(2+) as a cofactor. Mn(2+) is required as a cofactor.

It is found in the cytoplasm. The enzyme catalyses 2 D-alanine + ATP = D-alanyl-D-alanine + ADP + phosphate + H(+). It participates in cell wall biogenesis; peptidoglycan biosynthesis. Its function is as follows. Cell wall formation. In Dechloromonas aromatica (strain RCB), this protein is D-alanine--D-alanine ligase.